Here is a 122-residue protein sequence, read N- to C-terminus: UPF0344 protein BPUM_1008 (122 aa).

A run of 4 helical transmembrane segments spans residues 5–25 (LHIT…ALAG), 33–53 (IVHM…VELY), 60–80 (IPGF…VIGF), and 93–113 (SVTG…LLGL).

This sequence belongs to the UPF0344 family.

The protein localises to the cell membrane. The chain is UPF0344 protein BPUM_1008 from Bacillus pumilus (strain SAFR-032).